Reading from the N-terminus, the 51-residue chain is Large ribosomal subunit protein eL39 (51 aa).

The protein belongs to the eukaryotic ribosomal protein eL39 family.

This Aeropyrum pernix (strain ATCC 700893 / DSM 11879 / JCM 9820 / NBRC 100138 / K1) protein is Large ribosomal subunit protein eL39 (rpl39e).